The sequence spans 215 residues: Probable phosphoglycerate mutase GpmB (215 aa).

Substrate is bound by residues 8–15 (RHGETQWN), 21–22 (QG), Arg-58, Lys-60, 82–85 (ELDM), 104–105 (RR), and 151–152 (GI). Residue His-9 is the Tele-phosphohistidine intermediate of the active site. Glu-82 (proton donor/acceptor) is an active-site residue.

Belongs to the phosphoglycerate mutase family. GpmB subfamily.

It catalyses the reaction (2R)-2-phosphoglycerate = (2R)-3-phosphoglycerate. Its pathway is carbohydrate degradation; glycolysis; pyruvate from D-glyceraldehyde 3-phosphate: step 3/5. The sequence is that of Probable phosphoglycerate mutase GpmB from Salmonella arizonae (strain ATCC BAA-731 / CDC346-86 / RSK2980).